The chain runs to 258 residues: Thiazole synthase (258 aa).

Residue K100 is the Schiff-base intermediate with DXP of the active site. 1-deoxy-D-xylulose 5-phosphate-binding positions include G161, 187–188, and 209–210; these read AG and NT.

The protein belongs to the ThiG family. In terms of assembly, homotetramer. Forms heterodimers with either ThiH or ThiS.

It localises to the cytoplasm. It catalyses the reaction [ThiS sulfur-carrier protein]-C-terminal-Gly-aminoethanethioate + 2-iminoacetate + 1-deoxy-D-xylulose 5-phosphate = [ThiS sulfur-carrier protein]-C-terminal Gly-Gly + 2-[(2R,5Z)-2-carboxy-4-methylthiazol-5(2H)-ylidene]ethyl phosphate + 2 H2O + H(+). It functions in the pathway cofactor biosynthesis; thiamine diphosphate biosynthesis. In terms of biological role, catalyzes the rearrangement of 1-deoxy-D-xylulose 5-phosphate (DXP) to produce the thiazole phosphate moiety of thiamine. Sulfur is provided by the thiocarboxylate moiety of the carrier protein ThiS. In vitro, sulfur can be provided by H(2)S. In Campylobacter jejuni subsp. jejuni serotype O:6 (strain 81116 / NCTC 11828), this protein is Thiazole synthase.